Consider the following 668-residue polypeptide: MLKQLSRSLGIRSSPIVANLIRSKQVCTRGFHISLVKQNTSSKVNEITDITSDSLKVKEDAAGSDLPSTKTDKKSKSESFQPVKFEDFKGKGYIHDSIINSLHKNDFKELTPIQQKSLVPIFNTEKGLVCRAKTGTGKTLAFAVPTLQYAYKNRGKGVSTVVLVPTRDLAFQIEEEYRKLISHLKYNERPNLELIIGGQRTSFNPRRPAEIVIATPGRLEKELQTDRKLAKCFSNVTYRIYDEADRLLDVGFESVLNEIDGLLYKVRTTPKPIKSLLFSATVDEAISEFSKKHIHPEYEFLNTVTKDDLEIPENIHQQLIECTDGIDKVNVSLSELHGIMKQHNDYKVIVFLPTKTAVDWFYEYITNALDDELFELFSKPPRVFMLHGGRSVRQRSAALKGFKVAKKGILISTDVAARGIDVKDVTNVMQMFPSVEIADYIHKVGRTGRAGKKGKASLFATPAELPYVSLLKRKRKVKFQEVIQSEKLNSSNIIDQIESPLDSTKEFLATMVGYLQQLQSAHRLDYDSLVIENMELYRKLVRDDKAMLESRILSRIGKGISAHVKRRYFTRTRYQSHDDAEFDSYSDFSRSGMSQRPRSNDRSSKMTFNGRGKYGNNRNNDWSYQNKNRYNNNNNRQTERSYDSDRKSHNDWKYEKKFEHRRIRDHDE.

Residues 1–38 constitute a mitochondrion transit peptide; sequence MLKQLSRSLGIRSSPIVANLIRSKQVCTRGFHISLVKQ. The Q motif signature appears at 87–115; that stretch reads DFKGKGYIHDSIINSLHKNDFKELTPIQQ. A Helicase ATP-binding domain is found at 119–300; the sequence is VPIFNTEKGL…KKHIHPEYEF (182 aa). Residue 132–139 participates in ATP binding; it reads AKTGTGKT. Positions 242-245 match the DEAD box motif; sequence DEAD. The region spanning 332–501 is the Helicase C-terminal domain; it reads SLSELHGIMK…NIIDQIESPL (170 aa). The disordered stretch occupies residues 585 to 668; the sequence is YSDFSRSGMS…EHRRIRDHDE (84 aa). Over residues 586-597 the composition is skewed to polar residues; it reads SDFSRSGMSQRP. Residues 609–636 show a composition bias toward low complexity; sequence NGRGKYGNNRNNDWSYQNKNRYNNNNNR. Over residues 637 to 668 the composition is skewed to basic and acidic residues; the sequence is QTERSYDSDRKSHNDWKYEKKFEHRRIRDHDE.

Belongs to the DEAD box helicase family. DDX18/HAS1 subfamily.

It is found in the mitochondrion matrix. It carries out the reaction ATP + H2O = ADP + phosphate + H(+). ATP-dependent RNA helicase required for mitochondrial splicing of group I and II introns. Also required for efficient mitochondrial translation. This Candida albicans (strain SC5314 / ATCC MYA-2876) (Yeast) protein is ATP-dependent RNA helicase MSS116, mitochondrial (MSS116).